We begin with the raw amino-acid sequence, 347 residues long: Palmitoyltransferase ZDHHC19 (347 aa).

A run of 2 helical transmembrane segments spans residues 29–49 (VFAAFNVTLLLFLSGLFFGFP) and 59–79 (WAFPAITGPLFILTFFSLVSL). The DHHC domain maps to 112–162 (EWCPKCLFHRPPRTYHCPWCNICVEDFDHHCKWVNNCIGHRNFRLFMLLVL). Catalysis depends on cysteine 142, which acts as the S-palmitoyl cysteine intermediate. Helical transmembrane passes span 156–176 (LFMLLVLSLCLYSGALLVTCL) and 194–214 (AILVAVPAAGFLIPLFLLLLI). The tract at residues 275–347 (IQEKTKPSPP…PTAEPAAGDP (73 aa)) is disordered.

It belongs to the DHHC palmitoyltransferase family.

The protein localises to the golgi apparatus membrane. It is found in the cytoplasm. The protein resides in the perinuclear region. The enzyme catalyses L-cysteinyl-[protein] + hexadecanoyl-CoA = S-hexadecanoyl-L-cysteinyl-[protein] + CoA. In terms of biological role, palmitoyltransferase that mediates palmitoylation oproteins, such as RRAS and SQSTM1. Catalyzes palmitoylation of RRAS, leading to increased cell viability. Acts as a positive regulator of autophagy by mediating palmitoylation of SQSTM1, promoting affinity between SQSTM1 and ATG8 proteins and recruitment of ubiquitinated cargo proteins to autophagosomes. This Mus musculus (Mouse) protein is Palmitoyltransferase ZDHHC19 (Zdhhc19).